Here is a 229-residue protein sequence, read N- to C-terminus: Nectarin-1 (229 aa).

The first 32 residues, 1 to 32 (MAAFGINSKIFQSMEMAILFLLAISIDRYCFA), serve as a signal peptide directing secretion. An intrachain disulfide couples Cys42 to Cys57. Residue Asn60 is glycosylated (N-linked (GlcNAc...) asparagine). One can recognise a Cupin type-1 domain in the interval 69–217 (LAISKPGATN…TFQINTEDVQ (149 aa)). Positions 117, 119, 124, and 163 each coordinate Mn(2+).

As to quaternary structure, monomer. In the absence of manganese, it forms tetrameric and pentameric forms which show superoxide dismutase activity. Mn(2+) is required as a cofactor. As to expression, nectary tissues and to a lower level ovary. Not detected in petals, stems, leaves, roots or other floral tissues.

The protein resides in the secreted. Its subcellular location is the extracellular space. The protein localises to the apoplast. The catalysed reaction is 2 superoxide + 2 H(+) = H2O2 + O2. In terms of biological role, may interact with bacterial adhesins thereby protecting the reproductive tissues from microbial attack. Has no oxalate oxidase activity. This chain is Nectarin-1 (NECI), found in Nicotiana langsdorffii x Nicotiana sanderae (Ornamental tobacco).